A 119-amino-acid polypeptide reads, in one-letter code: uncharacterized protein (119 aa).

This sequence to Synechocystis PCC 6803 slr0903.

This is an uncharacterized protein from Methanocaldococcus jannaschii (strain ATCC 43067 / DSM 2661 / JAL-1 / JCM 10045 / NBRC 100440) (Methanococcus jannaschii).